A 358-amino-acid chain; its full sequence is Chorismate synthase (358 aa).

Arg-47 contacts NADP(+). Residues 124–126 (RSS), 240–241 (NA), Gly-284, 299–303 (KPVAT), and Arg-325 each bind FMN.

Belongs to the chorismate synthase family. As to quaternary structure, homotetramer. FMNH2 serves as cofactor.

The catalysed reaction is 5-O-(1-carboxyvinyl)-3-phosphoshikimate = chorismate + phosphate. It functions in the pathway metabolic intermediate biosynthesis; chorismate biosynthesis; chorismate from D-erythrose 4-phosphate and phosphoenolpyruvate: step 7/7. Functionally, catalyzes the anti-1,4-elimination of the C-3 phosphate and the C-6 proR hydrogen from 5-enolpyruvylshikimate-3-phosphate (EPSP) to yield chorismate, which is the branch point compound that serves as the starting substrate for the three terminal pathways of aromatic amino acid biosynthesis. This reaction introduces a second double bond into the aromatic ring system. The protein is Chorismate synthase of Phocaeicola vulgatus (strain ATCC 8482 / DSM 1447 / JCM 5826 / CCUG 4940 / NBRC 14291 / NCTC 11154) (Bacteroides vulgatus).